The primary structure comprises 244 residues: 5-oxoprolinase subunit A (244 aa).

The protein belongs to the LamB/PxpA family. Forms a complex composed of PxpA, PxpB and PxpC.

It catalyses the reaction 5-oxo-L-proline + ATP + 2 H2O = L-glutamate + ADP + phosphate + H(+). Functionally, catalyzes the cleavage of 5-oxoproline to form L-glutamate coupled to the hydrolysis of ATP to ADP and inorganic phosphate. In Salmonella paratyphi A (strain ATCC 9150 / SARB42), this protein is 5-oxoprolinase subunit A.